We begin with the raw amino-acid sequence, 598 residues long: Serine/threonine-protein kinase cot-1 (598 aa).

Polar residues-rich tracts occupy residues 1-16 (MDNTNRPHLNLGTNDT), 24-33 (TYPTTPSTFP), and 99-126 (PRTSGNSGQQQTYGNYLSAPMPSNTQTE). Disordered regions lie at residues 1 to 46 (MDNT…GGSQ), 80 to 148 (GSAG…NQKK), and 163 to 190 (RARERNQRQSEMEQKLGETNDARRRESI). Residues 214 to 518 (YQTIKIIGKG…AHEIKSHAFF (305 aa)) enclose the Protein kinase domain. ATP contacts are provided by residues 220–228 (IGKGAFGEV) and lysine 243. Aspartate 337 (proton acceptor) is an active-site residue. Positions 519–598 (RGVEFDSLRR…TFKRFDNNFR (80 aa)) constitute an AGC-kinase C-terminal domain.

The protein belongs to the protein kinase superfamily. STE Ser/Thr protein kinase family. COT1 subfamily.

The enzyme catalyses L-seryl-[protein] + ATP = O-phospho-L-seryl-[protein] + ADP + H(+). It carries out the reaction L-threonyl-[protein] + ATP = O-phospho-L-threonyl-[protein] + ADP + H(+). Functionally, protein kinase required for hyphal elongation. This Neurospora crassa (strain ATCC 24698 / 74-OR23-1A / CBS 708.71 / DSM 1257 / FGSC 987) protein is Serine/threonine-protein kinase cot-1 (cot-1).